Here is a 125-residue protein sequence, read N- to C-terminus: Small ribosomal subunit protein uS12 (125 aa).

At Asp-89 the chain carries 3-methylthioaspartic acid. Residues 105 to 125 form a disordered region; the sequence is AGVKDRKQARSKYGAKRPKAA. A compositionally biased stretch (basic residues) spans 113–125; it reads ARSKYGAKRPKAA.

This sequence belongs to the universal ribosomal protein uS12 family. Part of the 30S ribosomal subunit. Contacts proteins S8 and S17. May interact with IF1 in the 30S initiation complex.

With S4 and S5 plays an important role in translational accuracy. Its function is as follows. Interacts with and stabilizes bases of the 16S rRNA that are involved in tRNA selection in the A site and with the mRNA backbone. Located at the interface of the 30S and 50S subunits, it traverses the body of the 30S subunit contacting proteins on the other side and probably holding the rRNA structure together. The combined cluster of proteins S8, S12 and S17 appears to hold together the shoulder and platform of the 30S subunit. The polypeptide is Small ribosomal subunit protein uS12 (Methylobacillus flagellatus (strain ATCC 51484 / DSM 6875 / VKM B-1610 / KT)).